The chain runs to 284 residues: Bifunctional protein FolD (284 aa).

Residues 166-168 and I232 contribute to the NADP(+) site; that span reads GAS.

Belongs to the tetrahydrofolate dehydrogenase/cyclohydrolase family. In terms of assembly, homodimer.

The enzyme catalyses (6R)-5,10-methylene-5,6,7,8-tetrahydrofolate + NADP(+) = (6R)-5,10-methenyltetrahydrofolate + NADPH. It catalyses the reaction (6R)-5,10-methenyltetrahydrofolate + H2O = (6R)-10-formyltetrahydrofolate + H(+). It functions in the pathway one-carbon metabolism; tetrahydrofolate interconversion. Its function is as follows. Catalyzes the oxidation of 5,10-methylenetetrahydrofolate to 5,10-methenyltetrahydrofolate and then the hydrolysis of 5,10-methenyltetrahydrofolate to 10-formyltetrahydrofolate. The chain is Bifunctional protein FolD from Alteromonas mediterranea (strain DSM 17117 / CIP 110805 / LMG 28347 / Deep ecotype).